The primary structure comprises 184 residues: ATP synthase subunit b, chloroplastic (184 aa).

Residues 27–49 (LATNPINLSVVFGVLIFFGKGVL) form a helical membrane-spanning segment.

The protein belongs to the ATPase B chain family. F-type ATPases have 2 components, F(1) - the catalytic core - and F(0) - the membrane proton channel. F(1) has five subunits: alpha(3), beta(3), gamma(1), delta(1), epsilon(1). F(0) has four main subunits: a(1), b(1), b'(1) and c(10-14). The alpha and beta chains form an alternating ring which encloses part of the gamma chain. F(1) is attached to F(0) by a central stalk formed by the gamma and epsilon chains, while a peripheral stalk is formed by the delta, b and b' chains.

The protein resides in the plastid. It is found in the chloroplast thylakoid membrane. In terms of biological role, f(1)F(0) ATP synthase produces ATP from ADP in the presence of a proton or sodium gradient. F-type ATPases consist of two structural domains, F(1) containing the extramembraneous catalytic core and F(0) containing the membrane proton channel, linked together by a central stalk and a peripheral stalk. During catalysis, ATP synthesis in the catalytic domain of F(1) is coupled via a rotary mechanism of the central stalk subunits to proton translocation. Component of the F(0) channel, it forms part of the peripheral stalk, linking F(1) to F(0). The chain is ATP synthase subunit b, chloroplastic from Olimarabidopsis pumila (Dwarf rocket).